Consider the following 84-residue polypeptide: RNA-binding protein Hfq (84 aa).

Positions 11–71 constitute a Sm domain; the sequence is DTFLNHVRKN…ISTIMPGHPV (61 aa).

This sequence belongs to the Hfq family. As to quaternary structure, homohexamer.

RNA chaperone that binds small regulatory RNA (sRNAs) and mRNAs to facilitate mRNA translational regulation in response to envelope stress, environmental stress and changes in metabolite concentrations. Also binds with high specificity to tRNAs. The polypeptide is RNA-binding protein Hfq (Methylorubrum populi (strain ATCC BAA-705 / NCIMB 13946 / BJ001) (Methylobacterium populi)).